We begin with the raw amino-acid sequence, 424 residues long: Serine--tRNA ligase (424 aa).

An L-serine-binding site is contributed by 232–234 (TAE). 263-265 (RSE) is an ATP binding site. Glu286 lines the L-serine pocket. ATP is bound at residue 350 to 353 (EISS). Residue Ser385 coordinates L-serine.

This sequence belongs to the class-II aminoacyl-tRNA synthetase family. Type-1 seryl-tRNA synthetase subfamily. Homodimer. The tRNA molecule binds across the dimer.

The protein resides in the cytoplasm. The enzyme catalyses tRNA(Ser) + L-serine + ATP = L-seryl-tRNA(Ser) + AMP + diphosphate + H(+). It catalyses the reaction tRNA(Sec) + L-serine + ATP = L-seryl-tRNA(Sec) + AMP + diphosphate + H(+). It participates in aminoacyl-tRNA biosynthesis; selenocysteinyl-tRNA(Sec) biosynthesis; L-seryl-tRNA(Sec) from L-serine and tRNA(Sec): step 1/1. Catalyzes the attachment of serine to tRNA(Ser). Is also able to aminoacylate tRNA(Sec) with serine, to form the misacylated tRNA L-seryl-tRNA(Sec), which will be further converted into selenocysteinyl-tRNA(Sec). The protein is Serine--tRNA ligase of Latilactobacillus sakei subsp. sakei (strain 23K) (Lactobacillus sakei subsp. sakei).